We begin with the raw amino-acid sequence, 32 residues long: Mu-theraphotoxin-Se1a (32 aa).

Disulfide bonds link Cys-2–Cys-17, Cys-9–Cys-22, and Cys-16–Cys-28.

This sequence belongs to the neurotoxin 10 (Hwtx-1) family. Expressed by the venom gland.

The protein resides in the secreted. Voltage-gated sodium channel Nav1.7/SCN9A inhibitor. This chain is Mu-theraphotoxin-Se1a, found in Selenocosmia effera (Tarantula spider).